The following is a 286-amino-acid chain: Bifunctional protein FolD (286 aa).

NADP(+)-binding positions include 165 to 167 (GRS) and Ser-190.

The protein belongs to the tetrahydrofolate dehydrogenase/cyclohydrolase family. In terms of assembly, homodimer.

It carries out the reaction (6R)-5,10-methylene-5,6,7,8-tetrahydrofolate + NADP(+) = (6R)-5,10-methenyltetrahydrofolate + NADPH. The enzyme catalyses (6R)-5,10-methenyltetrahydrofolate + H2O = (6R)-10-formyltetrahydrofolate + H(+). It functions in the pathway one-carbon metabolism; tetrahydrofolate interconversion. Its function is as follows. Catalyzes the oxidation of 5,10-methylenetetrahydrofolate to 5,10-methenyltetrahydrofolate and then the hydrolysis of 5,10-methenyltetrahydrofolate to 10-formyltetrahydrofolate. The protein is Bifunctional protein FolD of Staphylococcus aureus (strain USA300).